A 324-amino-acid polypeptide reads, in one-letter code: [Acyl-carrier-protein] phosphodiesterase PptH (324 aa).

Mn(2+)-binding residues include D22, H24, and D51. Residues D51, N79, H205, and H246 each contribute to the Fe cation site. H248 lines the Mn(2+) pocket.

This sequence belongs to the metallophosphoesterase superfamily. Fe(3+) is required as a cofactor. Mn(2+) serves as cofactor.

The enzyme catalyses holo-[ACP] + H2O = apo-[ACP] + (R)-4'-phosphopantetheine + H(+). Functionally, catalyzes the hydrolysis of the phosphopantetheine group from substrate holo-carrier proteins. The polypeptide is [Acyl-carrier-protein] phosphodiesterase PptH (Mycobacterium tuberculosis (strain ATCC 25618 / H37Rv)).